The chain runs to 482 residues: ADP-ribosylation factor GTPase-activating protein effector protein 1 (482 aa).

Positions 116–156 (QHKSTHSHHINHQTHPIHSSSSNSNSNNRIPTKTDSSKQHT) are disordered. Positions 118–127 (KSTHSHHINH) are enriched in basic residues. Positions 134-143 (SSSSNSNSNN) are enriched in low complexity. In terms of domain architecture, Arf-GAP spans 170 to 297 (DELLSIVRKI…FVIDSNQGRE (128 aa)). Residues 186 to 210 (CCDCGSTATVEWVSINLLCILCIKC) form a C4-type zinc finger.

Its subcellular location is the cytoplasm. In terms of biological role, GTPase-activating protein (GAP) for the ADP ribosylation factors ARF1 and ARF2. May be involved in the endocytic pathway. The polypeptide is ADP-ribosylation factor GTPase-activating protein effector protein 1 (AGE1) (Saccharomyces cerevisiae (strain ATCC 204508 / S288c) (Baker's yeast)).